A 303-amino-acid polypeptide reads, in one-letter code: Glycine--tRNA ligase alpha subunit (303 aa).

This sequence belongs to the class-II aminoacyl-tRNA synthetase family. As to quaternary structure, tetramer of two alpha and two beta subunits.

The protein resides in the cytoplasm. It carries out the reaction tRNA(Gly) + glycine + ATP = glycyl-tRNA(Gly) + AMP + diphosphate. The protein is Glycine--tRNA ligase alpha subunit of Erwinia tasmaniensis (strain DSM 17950 / CFBP 7177 / CIP 109463 / NCPPB 4357 / Et1/99).